A 598-amino-acid chain; its full sequence is Arginine--tRNA ligase (598 aa).

A 'HIGH' region motif is present at residues 131-141; that stretch reads ANPTGPMHVGH. A disordered region spans residues 288-308; it reads KLPPPKSKKGQPPAQPQPDEE.

This sequence belongs to the class-I aminoacyl-tRNA synthetase family. Monomer.

The protein localises to the cytoplasm. It carries out the reaction tRNA(Arg) + L-arginine + ATP = L-arginyl-tRNA(Arg) + AMP + diphosphate. The chain is Arginine--tRNA ligase from Anaeromyxobacter sp. (strain K).